A 155-amino-acid chain; its full sequence is Cyanate hydratase (155 aa).

Active-site residues include Arg101, Glu104, and Ser127.

Belongs to the cyanase family.

The enzyme catalyses cyanate + hydrogencarbonate + 3 H(+) = NH4(+) + 2 CO2. Its function is as follows. Catalyzes the reaction of cyanate with bicarbonate to produce ammonia and carbon dioxide. This chain is Cyanate hydratase, found in Coccidioides posadasii (strain C735) (Valley fever fungus).